Here is a 260-residue protein sequence, read N- to C-terminus: Thiazole synthase (260 aa).

Catalysis depends on Lys-96, which acts as the Schiff-base intermediate with DXP. 1-deoxy-D-xylulose 5-phosphate contacts are provided by residues Gly-157, 184-185 (AG), and 206-207 (NT).

The protein belongs to the ThiG family. Homotetramer. Forms heterodimers with either ThiH or ThiS.

It is found in the cytoplasm. The enzyme catalyses [ThiS sulfur-carrier protein]-C-terminal-Gly-aminoethanethioate + 2-iminoacetate + 1-deoxy-D-xylulose 5-phosphate = [ThiS sulfur-carrier protein]-C-terminal Gly-Gly + 2-[(2R,5Z)-2-carboxy-4-methylthiazol-5(2H)-ylidene]ethyl phosphate + 2 H2O + H(+). It functions in the pathway cofactor biosynthesis; thiamine diphosphate biosynthesis. Its function is as follows. Catalyzes the rearrangement of 1-deoxy-D-xylulose 5-phosphate (DXP) to produce the thiazole phosphate moiety of thiamine. Sulfur is provided by the thiocarboxylate moiety of the carrier protein ThiS. In vitro, sulfur can be provided by H(2)S. In Rhodopseudomonas palustris (strain BisA53), this protein is Thiazole synthase.